We begin with the raw amino-acid sequence, 300 residues long: tRNA uridine(34) hydroxylase (300 aa).

One can recognise a Rhodanese domain in the interval 128-222; it reads ADPEVIVVDT…YLEDVPQAQS (95 aa). The Cysteine persulfide intermediate role is filled by Cys-182.

The protein belongs to the TrhO family.

The catalysed reaction is uridine(34) in tRNA + AH2 + O2 = 5-hydroxyuridine(34) in tRNA + A + H2O. In terms of biological role, catalyzes oxygen-dependent 5-hydroxyuridine (ho5U) modification at position 34 in tRNAs. This is tRNA uridine(34) hydroxylase from Deinococcus radiodurans (strain ATCC 13939 / DSM 20539 / JCM 16871 / CCUG 27074 / LMG 4051 / NBRC 15346 / NCIMB 9279 / VKM B-1422 / R1).